Here is a 654-residue protein sequence, read N- to C-terminus: tRNA 5-methylaminomethyl-2-thiouridine biosynthesis bifunctional protein MnmC (654 aa).

Residues 1–235 (MSDFQHAQLD…KREMLSGTYQ (235 aa)) are tRNA (mnm(5)s(2)U34)-methyltransferase. The interval 261–654 (VGGGLAGCAS…LRDLVRGQRG (394 aa)) is FAD-dependent cmnm(5)s(2)U34 oxidoreductase.

In the N-terminal section; belongs to the methyltransferase superfamily. tRNA (mnm(5)s(2)U34)-methyltransferase family. It in the C-terminal section; belongs to the DAO family. It depends on FAD as a cofactor.

It localises to the cytoplasm. It carries out the reaction 5-aminomethyl-2-thiouridine(34) in tRNA + S-adenosyl-L-methionine = 5-methylaminomethyl-2-thiouridine(34) in tRNA + S-adenosyl-L-homocysteine + H(+). In terms of biological role, catalyzes the last two steps in the biosynthesis of 5-methylaminomethyl-2-thiouridine (mnm(5)s(2)U) at the wobble position (U34) in tRNA. Catalyzes the FAD-dependent demodification of cmnm(5)s(2)U34 to nm(5)s(2)U34, followed by the transfer of a methyl group from S-adenosyl-L-methionine to nm(5)s(2)U34, to form mnm(5)s(2)U34. This chain is tRNA 5-methylaminomethyl-2-thiouridine biosynthesis bifunctional protein MnmC, found in Pseudomonas aeruginosa (strain ATCC 15692 / DSM 22644 / CIP 104116 / JCM 14847 / LMG 12228 / 1C / PRS 101 / PAO1).